We begin with the raw amino-acid sequence, 260 residues long: 4-hydroxy-tetrahydrodipicolinate reductase (260 aa).

Residues Gly8 to Met13, Glu35, Gly91 to Thr93, and Ala115 to Met118 contribute to the NAD(+) site. His148 functions as the Proton donor/acceptor in the catalytic mechanism. His149 contacts (S)-2,3,4,5-tetrahydrodipicolinate. Residue Lys152 is the Proton donor of the active site. Position 158 to 159 (Gly158 to Thr159) interacts with (S)-2,3,4,5-tetrahydrodipicolinate.

This sequence belongs to the DapB family.

It is found in the cytoplasm. The enzyme catalyses (S)-2,3,4,5-tetrahydrodipicolinate + NAD(+) + H2O = (2S,4S)-4-hydroxy-2,3,4,5-tetrahydrodipicolinate + NADH + H(+). It carries out the reaction (S)-2,3,4,5-tetrahydrodipicolinate + NADP(+) + H2O = (2S,4S)-4-hydroxy-2,3,4,5-tetrahydrodipicolinate + NADPH + H(+). It participates in amino-acid biosynthesis; L-lysine biosynthesis via DAP pathway; (S)-tetrahydrodipicolinate from L-aspartate: step 4/4. Catalyzes the conversion of 4-hydroxy-tetrahydrodipicolinate (HTPA) to tetrahydrodipicolinate. The protein is 4-hydroxy-tetrahydrodipicolinate reductase of Rubrobacter xylanophilus (strain DSM 9941 / JCM 11954 / NBRC 16129 / PRD-1).